We begin with the raw amino-acid sequence, 1788 residues long: Laminin subunit beta-1 (1788 aa).

The signal sequence occupies residues 1–24 (MLELRLIVVIVLALLSWQWDPVDS). The disordered stretch occupies residues 23-43 (DSQRPPQHGRRDRPKYPPNKF). The Laminin N-terminal domain maps to 50–287 (ERSSCYPATG…GISNMVVRGS (238 aa)). 3 N-linked (GlcNAc...) asparagine glycosylation sites follow: N138, N201, and N232. 19 cysteine pairs are disulfide-bonded: C288–C297, C290–C318, C320–C329, C332–C352, C355–C364, C357–C382, C385–C394, C397–C415, C418–C431, C420–C446, C448–C457, C460–C475, C478–C491, C480–C498, C500–C509, C512–C526, C529–C541, C531–C548, and C550–C559. Laminin EGF-like domains lie at 288–354 (CSCY…ACKK), 355–417 (CECN…VCQP), 418–477 (CDCD…GCEP), and 478–528 (CTCN…GCSL). N-linked (GlcNAc...) asparagine glycosylation occurs at N487. The region spanning 529–559 (CNCDAGGSYDNYCDVISGQCRCRPHMTGRSC) is the Laminin EGF-like 5; truncated domain. In terms of domain architecture, Laminin IV type B spans 567–783 (FIPLLPEVHE…LDNILSVFVH (217 aa)). N591 carries an N-linked (GlcNAc...) asparagine glycan. Residues 641–643 (RGD) carry the Cell attachment site motif. Disulfide bonds link C789-C801, C791-C808, C810-C819, C822-C834, C837-C849, C839-C856, C858-C867, C870-C880, C883-C892, C885-C899, C902-C911, C914-C930, C933-C949, C935-C960, C962-C971, C974-C988, C991-C1005, C993-C1012, C1015-C1024, C1027-C1040, C1043-C1057, C1045-C1064, C1066-C1075, C1078-C1091, C1094-C1106, C1096-C1113, C1115-C1124, C1127-C1139, C1142-C1154, C1144-C1161, C1163-C1172, and C1175-C1186. Laminin EGF-like domains lie at 789–836 (CNCN…GCKA), 837–882 (CDCN…ECRV), 883–932 (CQCN…GCRP), 933–990 (CRCP…TCSK), 991–1042 (CECS…NCQQ), 1043–1093 (CECD…GCES), 1094–1141 (CNCD…KCQP), and 1142–1188 (CECD…HCSP). Residue N1051 is glycosylated (N-linked (GlcNAc...) asparagine). The segment at 1189 to 1405 (CGECFNNWDL…SQIPELNNQV (217 aa)) is domain II. N1246, N1301, N1330, and N1341 each carry an N-linked (GlcNAc...) asparagine glycan. Residues 1255 to 1405 (EKLDYETQSL…SQIPELNNQV (151 aa)) are a coiled coil. The tract at residues 1406–1432 (CGKPGDPCDSLCGGAGCGHCGGFLSCE) is domain alpha. The interval 1433-1788 (HGAKTHSEEA…RGSHYRQCYT (356 aa)) is domain I. Residues 1453-1505 (ITSKKDQADQTIRALTQAKLNASEAYEKAKRGFEQSERYLNQTNANIKLAENL) are a coiled coil. N-linked (GlcNAc...) asparagine glycans are attached at residues N1473, N1493, and N1515. Positions 1540 to 1561 (EEIETLGDQINRAVSSLKNVEA) form a coiled coil. N1581, N1644, and N1703 each carry an N-linked (GlcNAc...) asparagine glycan. A coiled-coil region spans residues 1608–1762 (QGKAKDAIQQ…QQLLRLQAEI (155 aa)). Residues 1690–1719 (GEANNLQSATSATNQTLTDRASRSENARER) form a disordered region. The span at 1693–1708 (NNLQSATSATNQTLTD) shows a compositional bias: polar residues. Residues 1709–1719 (RASRSENARER) are compositionally biased toward basic and acidic residues.

Laminin is a complex glycoprotein, consisting of three different polypeptide chains (alpha, beta, gamma), which are bound to each other by disulfide bonds into a cross-shaped molecule comprising one long and three short arms with globules at each end. In terms of tissue distribution, found in the basement membranes (major component).

Its subcellular location is the secreted. It is found in the extracellular space. The protein localises to the extracellular matrix. It localises to the basement membrane. Functionally, binding to cells via a high affinity receptor, laminin is thought to mediate the attachment, migration and organization of cells into tissues during embryonic development by interacting with other extracellular matrix components. Required for Ndg localization to the basement membrane. This Drosophila melanogaster (Fruit fly) protein is Laminin subunit beta-1 (LanB1).